Consider the following 175-residue polypeptide: Phosphatidylglycerol/phosphatidylinositol transfer protein (175 aa).

The signal sequence occupies residues 1–21 (MKFLSTAAALLVCLAPVSTTA). A propeptide spanning residues 22–37 (RSLDFFKSSQSPIQAQ) is cleaved from the precursor.

Belongs to the NPC2 family. In terms of assembly, monomer.

The protein resides in the cytoplasm. Its subcellular location is the cytoplasmic vesicle. The protein localises to the golgi apparatus. Functionally, catalyzes the intermembrane transfer of phosphatidylglycerol and phosphatidylinositol. This is Phosphatidylglycerol/phosphatidylinositol transfer protein (pltp) from Aspergillus oryzae (strain ATCC 42149 / RIB 40) (Yellow koji mold).